We begin with the raw amino-acid sequence, 117 residues long: Large ribosomal subunit protein bL19 (117 aa).

This sequence belongs to the bacterial ribosomal protein bL19 family.

Its function is as follows. This protein is located at the 30S-50S ribosomal subunit interface and may play a role in the structure and function of the aminoacyl-tRNA binding site. This Shewanella sediminis (strain HAW-EB3) protein is Large ribosomal subunit protein bL19.